A 148-amino-acid polypeptide reads, in one-letter code: Antigen GM6 (148 aa).

The interval 1-22 (KLKASDSRSFLDPMPEGVPLSE) is disordered. 2 repeat units span residues 1-68 (KLKA…HELA) and 69-136 (KLKA…HELA). A 3; truncated repeat occupies 137–148 (KLKASDSRSFQS).

It localises to the cytoplasm. The protein resides in the cytoskeleton. The polypeptide is Antigen GM6 (GM6) (Trypanosoma brucei gambiense).